Consider the following 185-residue polypeptide: MESTITIENVVASTALATEFDLVKIMDSGLEGAEYNKTKFPGLVYRIDNPKAAFLIFTSGKVVCTGAKTINNAHKAITNLANKLKDIGCDKINLEPEIHVQNIVASADLKTTLNLNTIAIAFGLENVEYEPEVFPGLIYRVEAPKVVVLVFSSGKLVITGGKCEEDCNGGLRIVRKEFDNLGLLC.

Tandem repeats lie at residues 7 to 84 (IENV…ANKL) and 100 to 178 (VQNI…RKEF).

This sequence belongs to the TBP family.

Functionally, general factor that plays a role in the activation of archaeal genes transcribed by RNA polymerase. Binds specifically to the TATA box promoter element which lies close to the position of transcription initiation. In Methanosarcina acetivorans (strain ATCC 35395 / DSM 2834 / JCM 12185 / C2A), this protein is TATA-box-binding protein 3.